Consider the following 361-residue polypeptide: 3-dehydroquinate synthase (361 aa).

Residues 73-78 (DAEAGK), 107-111 (GAATD), 131-132 (TT), Lys144, Lys153, and 171-174 (TLET) each bind NAD(+). 3 residues coordinate Zn(2+): Glu186, His249, and His265.

This sequence belongs to the sugar phosphate cyclases superfamily. Dehydroquinate synthase family. It depends on NAD(+) as a cofactor. The cofactor is Co(2+). Zn(2+) is required as a cofactor.

It localises to the cytoplasm. The enzyme catalyses 7-phospho-2-dehydro-3-deoxy-D-arabino-heptonate = 3-dehydroquinate + phosphate. Its pathway is metabolic intermediate biosynthesis; chorismate biosynthesis; chorismate from D-erythrose 4-phosphate and phosphoenolpyruvate: step 2/7. In terms of biological role, catalyzes the conversion of 3-deoxy-D-arabino-heptulosonate 7-phosphate (DAHP) to dehydroquinate (DHQ). This Mycobacterium leprae (strain TN) protein is 3-dehydroquinate synthase.